The sequence spans 325 residues: Small ribosomal subunit biogenesis GTPase RsgA (325 aa).

Positions 80-241 (LSKQIHIIAS…IIDTPGIKGF (162 aa)) constitute a CP-type G domain. GTP is bound by residues 129-132 (NKID) and 183-191 (GHSGVGKST). Residues Cys-265, Cys-270, His-272, and Cys-278 each contribute to the Zn(2+) site.

This sequence belongs to the TRAFAC class YlqF/YawG GTPase family. RsgA subfamily. As to quaternary structure, monomer. Associates with 30S ribosomal subunit, binds 16S rRNA. Zn(2+) serves as cofactor.

It localises to the cytoplasm. Its function is as follows. One of several proteins that assist in the late maturation steps of the functional core of the 30S ribosomal subunit. Helps release RbfA from mature subunits. May play a role in the assembly of ribosomal proteins into the subunit. Circularly permuted GTPase that catalyzes slow GTP hydrolysis, GTPase activity is stimulated by the 30S ribosomal subunit. In Flavobacterium johnsoniae (strain ATCC 17061 / DSM 2064 / JCM 8514 / BCRC 14874 / CCUG 350202 / NBRC 14942 / NCIMB 11054 / UW101) (Cytophaga johnsonae), this protein is Small ribosomal subunit biogenesis GTPase RsgA.